The primary structure comprises 987 residues: UPF0182 protein DIP0733 (987 aa).

A run of 7 helical transmembrane segments spans residues 19-39 (LTWL…VVDL), 63-83 (IGLF…AGWF), 115-135 (FLVV…QQAW), 176-196 (SVLL…LGGI), 212-234 (YAKV…SYWL), 261-281 (AKIV…SVIV), and 290-310 (ISTV…PIMM). Positions 904–927 (DLGEAKGLKPESQNRDKPEDKEGK) are enriched in basic and acidic residues. The interval 904 to 950 (DLGEAKGLKPESQNRDKPEDKEGKAPSTPSAPASGSGTTGEAIGKIN) is disordered. Residues 928-943 (APSTPSAPASGSGTTG) are compositionally biased toward low complexity.

Belongs to the UPF0182 family.

The protein resides in the cell membrane. The protein is UPF0182 protein DIP0733 of Corynebacterium diphtheriae (strain ATCC 700971 / NCTC 13129 / Biotype gravis).